A 561-amino-acid chain; its full sequence is MMQGDVSPNPSLIDRTIKMRKETETRKVVLAWGLLNVSMAGMIYTEMTGKLISTYYNVTYWPLWYIELALASLFSLNALFDFWRYFKYTVAPTSLVVSPGQQALLGLKQAVVQTTPPRDLAATQISPSPPSPSIQGQSVLSYSPSRSPSTSPKFATSCMTGYSPQLQGLSSGGLGSYSPGVTYSPVSGYNKLASFSLSPSSPYPTTVGPVESSGLRARYRSPPTVYNSPTDKEDYMTDLRTLDTFLRSEEEKQHRVKLGSPDSTSPSTSPTFWNYSRSVGDYAQTLKKFQYQLACRSQAPCANKDEADLISKQAAEEVWARVTMNRQLLDHMDSWTAKFRNWISETILVPLVQEIESVSTQMRRMGCPELQIGEASVTSLKQAALVRAPLIPTLNAIVQYLDLTPNQEYLFERIKELSQGGCMSSFRWNRGGDFKGRKWDTDLPTDSAIIMHVFCTYLDSRLPPHPKYPDGKTFTSQHFVQTPNKPDVTNENVFCIYQSAVNPPHYELIYQRHVYNLPKGRNNMFHTLLMFLYIIKTKESGMLGRVNLGLSGVNILWIFGE.

A Phosphoserine modification is found at Ser-11. Residues 28 to 48 (VVLAWGLLNVSMAGMIYTEMT) traverse the membrane as a helical segment. Asn-57 carries N-linked (GlcNAc...) asparagine glycosylation. The chain crosses the membrane as a helical span at residues 60–80 (YWPLWYIELALASLFSLNALF). Ser-98 carries the phosphoserine modification. Disordered stretches follow at residues 120-156 (LAATQISPSPPSPSIQGQSVLSYSPSRSPSTSPKFAT) and 200-232 (SSPYPTTVGPVESSGLRARYRSPPTVYNSPTDK). Positions 138-152 (SVLSYSPSRSPSTSP) are enriched in low complexity. Ser-201 and Ser-248 each carry phosphoserine. Residues 250-270 (EEKQHRVKLGSPDSTSPSTSP) form a disordered region. Low complexity predominate over residues 260-270 (SPDSTSPSTSP). N-linked (GlcNAc...) asparagine glycosylation is present at Asn-274. Position 278 is a phosphoserine (Ser-278).

Interacts with NUP205.

The protein resides in the membrane. It localises to the nucleus envelope. Its subcellular location is the golgi apparatus. It is found in the cytoplasm. Functionally, nuclear envelope protein which in association with NUP205, may be involved in nuclear transport of various nuclear proteins in addition to MYC. The chain is Transmembrane protein 209 (Tmem209) from Mus musculus (Mouse).